Reading from the N-terminus, the 252-residue chain is Phosphate import ATP-binding protein PstB (252 aa).

The ABC transporter domain maps to 5-247; that stretch reads LIASDVNIFY…PRDERTEAYV (243 aa). 37–44 contributes to the ATP binding site; the sequence is GPSGCGKT.

This sequence belongs to the ABC transporter superfamily. Phosphate importer (TC 3.A.1.7) family. The complex is composed of two ATP-binding proteins (PstB), two transmembrane proteins (PstC and PstA) and a solute-binding protein (PstS).

The protein resides in the cell membrane. It carries out the reaction phosphate(out) + ATP + H2O = ADP + 2 phosphate(in) + H(+). Its function is as follows. Part of the ABC transporter complex PstSACB involved in phosphate import. Responsible for energy coupling to the transport system. The polypeptide is Phosphate import ATP-binding protein PstB (Deinococcus geothermalis (strain DSM 11300 / CIP 105573 / AG-3a)).